Here is a 167-residue protein sequence, read N- to C-terminus: Ion-translocating oxidoreductase complex subunit B (167 aa).

The segment at 1-22 is hydrophobic; it reads MITLIIFSFLSFLLGIILSFTA. Residues 28 to 87 enclose the 4Fe-4S domain; sequence QEDPIVEIVNELLPQSQCAQCGYSGCYPYAKAIVENSEKINKCIPGGTDLISAISSVLSI. [4Fe-4S] cluster contacts are provided by Cys-45, Cys-48, Cys-53, Cys-70, Cys-113, Cys-116, Cys-119, Cys-123, Cys-143, Cys-146, Cys-149, and Cys-153. 2 consecutive 4Fe-4S ferredoxin-type domains span residues 104-133 and 134-163; these read NTVLINESNCVGCSKCASFCPVDAIVGAPN and FIHTVLQEFCTGCNICLLHCPTNCIEIKKE.

The protein belongs to the 4Fe4S bacterial-type ferredoxin family. RnfB subfamily. In terms of assembly, the complex is composed of six subunits: RnfA, RnfB, RnfC, RnfD, RnfE and RnfG. [4Fe-4S] cluster is required as a cofactor.

It is found in the cell inner membrane. In terms of biological role, part of a membrane-bound complex that couples electron transfer with translocation of ions across the membrane. The protein is Ion-translocating oxidoreductase complex subunit B of Buchnera aphidicola subsp. Acyrthosiphon pisum (strain Tuc7).